The following is a 100-amino-acid chain: Integration host factor subunit alpha (100 aa).

It belongs to the bacterial histone-like protein family. As to quaternary structure, heterodimer of an alpha and a beta chain.

Its function is as follows. This protein is one of the two subunits of integration host factor, a specific DNA-binding protein that functions in genetic recombination as well as in transcriptional and translational control. In Zymomonas mobilis subsp. mobilis (strain ATCC 31821 / ZM4 / CP4), this protein is Integration host factor subunit alpha (ihfA).